A 401-amino-acid chain; its full sequence is Succinyl-diaminopimelate desuccinylase (401 aa).

Position 82 (His82) interacts with Zn(2+). Asp84 is an active-site residue. Asp115 is a Zn(2+) binding site. Glu149 functions as the Proton acceptor in the catalytic mechanism. Glu150, Glu178, and His364 together coordinate Zn(2+).

Belongs to the peptidase M20A family. DapE subfamily. In terms of assembly, homodimer. Requires Zn(2+) as cofactor. Co(2+) serves as cofactor.

It carries out the reaction N-succinyl-(2S,6S)-2,6-diaminopimelate + H2O = (2S,6S)-2,6-diaminopimelate + succinate. Its pathway is amino-acid biosynthesis; L-lysine biosynthesis via DAP pathway; LL-2,6-diaminopimelate from (S)-tetrahydrodipicolinate (succinylase route): step 3/3. Catalyzes the hydrolysis of N-succinyl-L,L-diaminopimelic acid (SDAP), forming succinate and LL-2,6-diaminopimelate (DAP), an intermediate involved in the bacterial biosynthesis of lysine and meso-diaminopimelic acid, an essential component of bacterial cell walls. The sequence is that of Succinyl-diaminopimelate desuccinylase from Verminephrobacter eiseniae (strain EF01-2).